A 327-amino-acid polypeptide reads, in one-letter code: Undecaprenyl-phosphate 4-deoxy-4-formamido-L-arabinose transferase (327 aa).

Transmembrane regions (helical) follow at residues 236–256 (LSIF…LLVV) and 270–290 (VFML…GMGL).

This sequence belongs to the glycosyltransferase 2 family.

Its subcellular location is the cell inner membrane. It catalyses the reaction UDP-4-deoxy-4-formamido-beta-L-arabinose + di-trans,octa-cis-undecaprenyl phosphate = 4-deoxy-4-formamido-alpha-L-arabinopyranosyl di-trans,octa-cis-undecaprenyl phosphate + UDP. The protein operates within glycolipid biosynthesis; 4-amino-4-deoxy-alpha-L-arabinose undecaprenyl phosphate biosynthesis; 4-amino-4-deoxy-alpha-L-arabinose undecaprenyl phosphate from UDP-4-deoxy-4-formamido-beta-L-arabinose and undecaprenyl phosphate: step 1/2. It participates in bacterial outer membrane biogenesis; lipopolysaccharide biosynthesis. In terms of biological role, catalyzes the transfer of 4-deoxy-4-formamido-L-arabinose from UDP to undecaprenyl phosphate. The modified arabinose is attached to lipid A and is required for resistance to polymyxin and cationic antimicrobial peptides. The chain is Undecaprenyl-phosphate 4-deoxy-4-formamido-L-arabinose transferase from Klebsiella pneumoniae subsp. pneumoniae (strain ATCC 700721 / MGH 78578).